A 94-amino-acid polypeptide reads, in one-letter code: Co-chaperonin GroES (94 aa).

Belongs to the GroES chaperonin family. As to quaternary structure, heptamer of 7 subunits arranged in a ring. Interacts with the chaperonin GroEL.

The protein resides in the cytoplasm. Its function is as follows. Together with the chaperonin GroEL, plays an essential role in assisting protein folding. The GroEL-GroES system forms a nano-cage that allows encapsulation of the non-native substrate proteins and provides a physical environment optimized to promote and accelerate protein folding. GroES binds to the apical surface of the GroEL ring, thereby capping the opening of the GroEL channel. This Streptococcus agalactiae protein is Co-chaperonin GroES.